A 308-amino-acid polypeptide reads, in one-letter code: UDP-N-acetylenolpyruvoylglucosamine reductase (308 aa).

In terms of domain architecture, FAD-binding PCMH-type spans T33–G197. Residue R176 is part of the active site. Residue S226 is the Proton donor of the active site. E296 is a catalytic residue.

The protein belongs to the MurB family. FAD is required as a cofactor.

The protein localises to the cytoplasm. It catalyses the reaction UDP-N-acetyl-alpha-D-muramate + NADP(+) = UDP-N-acetyl-3-O-(1-carboxyvinyl)-alpha-D-glucosamine + NADPH + H(+). It functions in the pathway cell wall biogenesis; peptidoglycan biosynthesis. Functionally, cell wall formation. The protein is UDP-N-acetylenolpyruvoylglucosamine reductase of Staphylococcus carnosus (strain TM300).